A 347-amino-acid polypeptide reads, in one-letter code: NADH-ubiquinone oxidoreductase chain 2 (347 aa).

Helical transmembrane passes span 3–23 (PLIFTMIMLTVILGTTIVMMS), 25–45 (HWLMIWMGFEMNMLAVIPLLM), 59–79 (YFLTQATASMLLMLAVIINLL), 96–116 (IIMTLALGMKMGLAPFHFWVP), 122–144 (ISLSSGLILLTWQKLAPLSVLYV), 149–171 (INLDLILLMSMMSIAIGGWGGLN), 178–198 (ILAYSSIAHMGWMASILVFNP), 202–222 (LLNLLLYILMTTTTFMLFMVA), 247–267 (IMLSLGGLPPLTGFLPKWMII), 276–296 (ITLATLMAITALLNLFFYMRL), and 326–346 (LPVLIILSTITLPLAPAITLL).

It belongs to the complex I subunit 2 family. In terms of assembly, core subunit of respiratory chain NADH dehydrogenase (Complex I) which is composed of 45 different subunits. Interacts with TMEM242.

It localises to the mitochondrion inner membrane. The catalysed reaction is a ubiquinone + NADH + 5 H(+)(in) = a ubiquinol + NAD(+) + 4 H(+)(out). Its function is as follows. Core subunit of the mitochondrial membrane respiratory chain NADH dehydrogenase (Complex I) which catalyzes electron transfer from NADH through the respiratory chain, using ubiquinone as an electron acceptor. Essential for the catalytic activity and assembly of complex I. This chain is NADH-ubiquinone oxidoreductase chain 2, found in Saccopteryx bilineata (Greater white-lined bat).